We begin with the raw amino-acid sequence, 143 residues long: Hemoglobin subunit alpha-A (143 aa).

The 142-residue stretch at 2-143 (SLSGKDKSVV…LALALAERYR (142 aa)) folds into the Globin domain. Residue His-60 participates in O2 binding. His-89 provides a ligand contact to heme b.

The protein belongs to the globin family. As to quaternary structure, heterotetramer of two alpha chains and two beta chains. Red blood cells.

Functionally, involved in oxygen transport from gills to the various peripheral tissues. This Seriola quinqueradiata (Five-ray yellowtail) protein is Hemoglobin subunit alpha-A (hbaa).